We begin with the raw amino-acid sequence, 158 residues long: Phosphopantetheine adenylyltransferase (158 aa).

Threonine 10 contacts substrate. Residues 10–11 (TF) and histidine 18 each bind ATP. Substrate-binding residues include lysine 42, leucine 74, and arginine 88. ATP-binding positions include 89 to 91 (GLR), glutamate 99, and 124 to 130 (NSFISST).

Belongs to the bacterial CoaD family. As to quaternary structure, homohexamer. Mg(2+) is required as a cofactor.

It localises to the cytoplasm. It catalyses the reaction (R)-4'-phosphopantetheine + ATP + H(+) = 3'-dephospho-CoA + diphosphate. Its pathway is cofactor biosynthesis; coenzyme A biosynthesis; CoA from (R)-pantothenate: step 4/5. Its function is as follows. Reversibly transfers an adenylyl group from ATP to 4'-phosphopantetheine, yielding dephospho-CoA (dPCoA) and pyrophosphate. This Shewanella loihica (strain ATCC BAA-1088 / PV-4) protein is Phosphopantetheine adenylyltransferase.